A 1081-amino-acid chain; its full sequence is Zinc finger protein 827 (1081 aa).

The span at 1–10 shows a compositional bias: basic and acidic residues; sequence MPRRKQEQPK. Positions 1-14 are mediates direct interaction with RBBP4; it reads MPRRKQEQPKRLPS. The disordered stretch occupies residues 1-77; sequence MPRRKQEQPK…DTSLGSTTPS (77 aa). The RRK motif; mediates NuRD recruitment to telomeres motif lies at 3-5; sequence RRK. The span at 62–77 shows a compositional bias: polar residues; it reads EQSTSPDTSLGSTTPS. Glycyl lysine isopeptide (Lys-Gly) (interchain with G-Cter in SUMO2) cross-links involve residues Lys-176, Lys-216, and Lys-226. Disordered regions lie at residues 258-280 and 305-348; these read KKVSERSLTPGQEHPPPASSFLS and EKSS…SLEL. Residues 327 to 344 are compositionally biased toward pro residues; that stretch reads VSPPPPPPPPPPPPPPPQ. Residues Lys-360 and Lys-372 each participate in a glycyl lysine isopeptide (Lys-Gly) (interchain with G-Cter in SUMO2) cross-link. C2H2-type zinc fingers lie at residues 374–396, 402–424, and 433–455; these read FQCPICGLVIKRKSYWKRHMVIH, HQCPLCPFRCARKDNLKSHMKVH, and FQCQLCPFTSSRHFSLKLHMRCH. Glycyl lysine isopeptide (Lys-Gly) (interchain with G-Cter in SUMO2) cross-links involve residues Lys-466, Lys-475, Lys-523, Lys-549, Lys-580, Lys-587, and Lys-597. Residues 525–553 form a disordered region; the sequence is EPKEDNGLPTSFTLNTADRPANHTKLKDP. Polar residues predominate over residues 616–627; sequence VFSPESEVSTPG. The interval 616–640 is disordered; sequence VFSPESEVSTPGVSEDALKPQEGKG. Residues 631-640 are compositionally biased toward basic and acidic residues; the sequence is DALKPQEGKG. Glycyl lysine isopeptide (Lys-Gly) (interchain with G-Cter in SUMO2) cross-links involve residues Lys-634, Lys-639, and Lys-658. Lys-673 is covalently cross-linked (Glycyl lysine isopeptide (Lys-Gly) (interchain with G-Cter in SUMO1); alternate). A Glycyl lysine isopeptide (Lys-Gly) (interchain with G-Cter in SUMO2); alternate cross-link involves residue Lys-673. Glycyl lysine isopeptide (Lys-Gly) (interchain with G-Cter in SUMO2) cross-links involve residues Lys-704, Lys-710, Lys-742, Lys-778, and Lys-798. 2 C2H2-type zinc fingers span residues 817–839 and 845–867; these read FPCDVCGKVFGRQQTLSRHLSLH and YKCHLCPYAAKCRANLNQHLTVH. Glycyl lysine isopeptide (Lys-Gly) (interchain with G-Cter in SUMO2) cross-links involve residues Lys-870 and Lys-891. 2 consecutive C2H2-type zinc fingers follow at residues 897–919 and 929–952; these read YSCHVCGFETELNVQFVSHMSLH and ICCTACDFVTMEEAEIKTHIGTKH. Over residues 947-960 the composition is skewed to basic and acidic residues; that stretch reads HIGTKHTGEDRKTP. Residues 947 to 1013 are disordered; that stretch reads HIGTKHTGED…GSQPSLNSEE (67 aa). A Glycyl lysine isopeptide (Lys-Gly) (interchain with G-Cter in SUMO2) cross-link involves residue Lys-958. A compositionally biased stretch (low complexity) spans 961-978; sequence SESNSPSSSSLSALSDSA. Basic and acidic residues predominate over residues 979 to 988; it reads NSKDDSDGSQ. Lys-1014 is covalently cross-linked (Glycyl lysine isopeptide (Lys-Gly) (interchain with G-Cter in SUMO2)). 2 consecutive C2H2-type zinc fingers follow at residues 1019–1041 and 1047–1069; these read FECVFCNFVCKTKNMFERHLQIH and FECDVCHKFMKTPEQLLEHKKCH.

The protein belongs to the krueppel C2H2-type zinc-finger protein family. Part of a transcription inhibitory ribonucleoprotein complex composed at least of the circular RNA circZNF827, HNRNPK and HNRNPL. Interacts with the nucleosome remodeling and histone deacetylase/NuRD complex. Interacts with RBBP4; the interaction is direct and recruits RBBP4, a component of the NuRD complex, to telomeres.

Its subcellular location is the nucleus. It localises to the chromosome. The protein resides in the telomere. In terms of biological role, as part of a ribonucleoprotein complex composed at least of HNRNPK, HNRNPL and the circular RNA circZNF827 that nucleates the complex on chromatin, may negatively regulate the transcription of genes involved in neuronal differentiation. Could also recruit the nucleosome remodeling and histone deacetylase/NuRD complex to telomeric regions of chromosomes to regulate chromatin remodeling as part of telomere maintenance. The protein is Zinc finger protein 827 (ZNF827) of Macaca fascicularis (Crab-eating macaque).